The primary structure comprises 140 residues: Ribosome maturation factor RimP (140 aa).

This sequence belongs to the RimP family.

The protein localises to the cytoplasm. Its function is as follows. Required for maturation of 30S ribosomal subunits. The polypeptide is Ribosome maturation factor RimP (Campylobacter jejuni subsp. jejuni serotype O:2 (strain ATCC 700819 / NCTC 11168)).